We begin with the raw amino-acid sequence, 398 residues long: Thyrotropin-releasing hormone receptor (398 aa).

At 1–28 (MENETVSELNQTQLQPRAVVALEYQVVT) the chain is on the extracellular side. N-linked (GlcNAc...) asparagine glycosylation is found at N3 and N10. Residues 29-51 (ILLVLIICGLGIVGNIMVVLVVM) form a helical membrane-spanning segment. At 52–61 (RTKHMRTPTN) the chain is on the cytoplasmic side. A helical transmembrane segment spans residues 62–83 (CYLVSLAVADLMVLVAAGLPNI). The Extracellular segment spans residues 84-99 (TDSIYGSWVYGYVGCL). A disulfide bridge connects residues C98 and C179. The chain crosses the membrane as a helical span at residues 100–121 (CITYLQYLGINASSCSITAFTI). Over 122 to 144 (ERYIAICHPIKAQFLCTFSRAKK) the chain is Cytoplasmic. Residues 145-168 (IIIFVWAFTSLYCMLWFFLLDLNI) form a helical membrane-spanning segment. The Extracellular portion of the chain corresponds to 169–193 (STYKDAIVISCGYKISRNYYSPIYL). A helical transmembrane segment spans residues 194–215 (MDFGVFYVVPMILATVLYGFIA). Topologically, residues 216-266 (RILFLNPIPSDPKENSKTWKNDSTHQNTNLNVNTSNRCFNSTVSSRKQVTK) are cytoplasmic. Residues 267-288 (MLAVVVILFALLWMPYRTLVVV) traverse the membrane as a helical segment. Topologically, residues 289–296 (NSFLSSPF) are extracellular. Residues 297-319 (QENWFLLFCRICIYLNSAINPVI) traverse the membrane as a helical segment. The Cytoplasmic segment spans residues 320–398 (YNLMSQKFRA…LASEVSFSQS (79 aa)).

This sequence belongs to the G-protein coupled receptor 1 family.

The protein localises to the cell membrane. Its function is as follows. Receptor for thyrotropin-releasing hormone (TRH). Upon ligand binding, this G-protein-coupled receptor triggers activation of the phosphatidylinositol (IP3)-calcium-protein kinase C (PKC) pathway. The chain is Thyrotropin-releasing hormone receptor (TRHR) from Homo sapiens (Human).